The sequence spans 212 residues: External core antigen (212 aa).

The first 19 residues, 1 to 19 (MQLFHLCLIISCSCPTVQA), serve as a signal peptide directing secretion. An HBEAG region spans residues 25-27 (GWL). The segment at 165–212 (NAPILSTLPETTVVRRRGRSPRRRTPSPRRRRSQSPRRRRSQSRESQC) is disordered. The span at 178–205 (VRRRGRSPRRRTPSPRRRRSQSPRRRRS) shows a compositional bias: basic residues. A 1; half-length repeat occupies 184 to 190 (SPRRRTP). Residues 184–206 (SPRRRTPSPRRRRSQSPRRRRSQ) form a 3 X 8 AA repeats of S-P-R-R-R-R-S-Q region. A propeptide spanning residues 184–212 (SPRRRTPSPRRRRSQSPRRRRSQSRESQC) is cleaved from the precursor. 2 tandem repeats follow at residues 191-198 (SPRRRRSQ) and 199-206 (SPRRRRSQ).

This sequence belongs to the orthohepadnavirus precore antigen family. In terms of assembly, homodimerizes. In terms of processing, phosphorylated. Post-translationally, cleaved by host furin.

It is found in the secreted. Its subcellular location is the host nucleus. In terms of biological role, may regulate immune response to the intracellular capsid in acting as a T-cell tolerogen, by having an immunoregulatory effect which prevents destruction of infected cells by cytotoxic T-cells. This immune regulation may predispose to chronicity during perinatal infections and prevent severe liver injury during adult infections. The chain is External core antigen from Homo sapiens (Human).